A 428-amino-acid polypeptide reads, in one-letter code: tRNA(Ile)-lysidine synthase (428 aa).

28 to 33 (SGGVDS) is an ATP binding site.

This sequence belongs to the tRNA(Ile)-lysidine synthase family.

Its subcellular location is the cytoplasm. The enzyme catalyses cytidine(34) in tRNA(Ile2) + L-lysine + ATP = lysidine(34) in tRNA(Ile2) + AMP + diphosphate + H(+). Its function is as follows. Ligates lysine onto the cytidine present at position 34 of the AUA codon-specific tRNA(Ile) that contains the anticodon CAU, in an ATP-dependent manner. Cytidine is converted to lysidine, thus changing the amino acid specificity of the tRNA from methionine to isoleucine. The protein is tRNA(Ile)-lysidine synthase of Streptococcus pyogenes serotype M1.